A 183-amino-acid polypeptide reads, in one-letter code: Holliday junction branch migration complex subunit RuvA (183 aa).

The segment at 1–64 (MIVAIEGIVS…EDSHKLYGFL (64 aa)) is domain I. A domain II region spans residues 65–138 (DTNEQRMFEL…SDAKINIENS (74 aa)). Serine 138 is a region of interest (flexible linker). Residues 138 to 183 (SNQDHAQALAALLSLGFKQENILKVLRTCESQNTSELIKEALKKLA) are domain III.

This sequence belongs to the RuvA family. As to quaternary structure, homotetramer. Forms an RuvA(8)-RuvB(12)-Holliday junction (HJ) complex. HJ DNA is sandwiched between 2 RuvA tetramers; dsDNA enters through RuvA and exits via RuvB. An RuvB hexamer assembles on each DNA strand where it exits the tetramer. Each RuvB hexamer is contacted by two RuvA subunits (via domain III) on 2 adjacent RuvB subunits; this complex drives branch migration. In the full resolvosome a probable DNA-RuvA(4)-RuvB(12)-RuvC(2) complex forms which resolves the HJ.

The protein resides in the cytoplasm. Functionally, the RuvA-RuvB-RuvC complex processes Holliday junction (HJ) DNA during genetic recombination and DNA repair, while the RuvA-RuvB complex plays an important role in the rescue of blocked DNA replication forks via replication fork reversal (RFR). RuvA specifically binds to HJ cruciform DNA, conferring on it an open structure. The RuvB hexamer acts as an ATP-dependent pump, pulling dsDNA into and through the RuvAB complex. HJ branch migration allows RuvC to scan DNA until it finds its consensus sequence, where it cleaves and resolves the cruciform DNA. This chain is Holliday junction branch migration complex subunit RuvA, found in Campylobacter lari (strain RM2100 / D67 / ATCC BAA-1060).